Reading from the N-terminus, the 193-residue chain is ATP-dependent Clp protease proteolytic subunit (193 aa).

Residue S98 is the Nucleophile of the active site. The active site involves H123.

It belongs to the peptidase S14 family. In terms of assembly, fourteen ClpP subunits assemble into 2 heptameric rings which stack back to back to give a disk-like structure with a central cavity, resembling the structure of eukaryotic proteasomes.

The protein localises to the cytoplasm. It carries out the reaction Hydrolysis of proteins to small peptides in the presence of ATP and magnesium. alpha-casein is the usual test substrate. In the absence of ATP, only oligopeptides shorter than five residues are hydrolyzed (such as succinyl-Leu-Tyr-|-NHMec, and Leu-Tyr-Leu-|-Tyr-Trp, in which cleavage of the -Tyr-|-Leu- and -Tyr-|-Trp bonds also occurs).. Functionally, cleaves peptides in various proteins in a process that requires ATP hydrolysis. Has a chymotrypsin-like activity. Plays a major role in the degradation of misfolded proteins. This is ATP-dependent Clp protease proteolytic subunit from Agathobacter rectalis (strain ATCC 33656 / DSM 3377 / JCM 17463 / KCTC 5835 / VPI 0990) (Eubacterium rectale).